We begin with the raw amino-acid sequence, 398 residues long: Exodeoxyribonuclease 7 large subunit (398 aa).

It belongs to the XseA family. As to quaternary structure, heterooligomer composed of large and small subunits.

It is found in the cytoplasm. The catalysed reaction is Exonucleolytic cleavage in either 5'- to 3'- or 3'- to 5'-direction to yield nucleoside 5'-phosphates.. Functionally, bidirectionally degrades single-stranded DNA into large acid-insoluble oligonucleotides, which are then degraded further into small acid-soluble oligonucleotides. This chain is Exodeoxyribonuclease 7 large subunit, found in Chlorobaculum tepidum (strain ATCC 49652 / DSM 12025 / NBRC 103806 / TLS) (Chlorobium tepidum).